Reading from the N-terminus, the 310-residue chain is Repression factor of MSEs protein 1 (310 aa).

2 disordered regions span residues 83-155 (TQEV…EANA) and 192-230 (DGIR…DEGE). Positions 92–106 (RNTSSSSSSTRSNSS) are enriched in low complexity. Polar residues predominate over residues 107–120 (ADISDTEYSGENTP). Positions 127–136 (SRRRRTRSRA) are enriched in basic residues. The segment covering 139–155 (RENSLPASLPSISEANA) has biased composition (polar residues). Basic and acidic residues predominate over residues 192–208 (DGIRRRSSRISERDKRR). Position 215 is a phosphoserine (Ser-215).

As to quaternary structure, interacts directly with HST1 and SUM1. Required for the interaction between HST1 and SUM1.

The protein resides in the nucleus. Tethering factor required for histone deacetylase HST1-mediated repression. Probably involved in targeting HST1 to a subset of SUM1-regulated genes. The polypeptide is Repression factor of MSEs protein 1 (RFM1) (Saccharomyces cerevisiae (strain ATCC 204508 / S288c) (Baker's yeast)).